A 168-amino-acid chain; its full sequence is Endoribonuclease YbeY (168 aa).

3 residues coordinate Zn(2+): His127, His131, and His137.

This sequence belongs to the endoribonuclease YbeY family. Zn(2+) is required as a cofactor.

The protein resides in the cytoplasm. Single strand-specific metallo-endoribonuclease involved in late-stage 70S ribosome quality control and in maturation of the 3' terminus of the 16S rRNA. The sequence is that of Endoribonuclease YbeY from Chromobacterium violaceum (strain ATCC 12472 / DSM 30191 / JCM 1249 / CCUG 213 / NBRC 12614 / NCIMB 9131 / NCTC 9757 / MK).